A 360-amino-acid chain; its full sequence is Archaemetzincin-2 (360 aa).

His-254 serves as a coordination point for Zn(2+). The Proton acceptor role is filled by Glu-255. Positions 258, 264, 265, 270, 289, and 292 each coordinate Zn(2+).

This sequence belongs to the peptidase M54 family. Zn(2+) serves as cofactor.

Its function is as follows. Probable zinc metalloprotease. The sequence is that of Archaemetzincin-2 (AMZ2) from Pongo abelii (Sumatran orangutan).